Consider the following 862-residue polypeptide: Bifunctional uridylyltransferase/uridylyl-removing enzyme (862 aa).

Positions 1–328 are uridylyltransferase; that stretch reads MSTAAIPTDA…FPRRAGAAIV (328 aa). A uridylyl-removing region spans residues 329 to 685; the sequence is INERFQAVRE…ARVSDADQGV (357 aa). In terms of domain architecture, HD spans 447-563; that stretch reads VDQHIMMVLR…GRFADTVGTE (117 aa). 2 ACT domains span residues 686-765 and 794-862; these read QVMV…DRPS and ILSL…RLHI.

Belongs to the GlnD family. Mg(2+) is required as a cofactor.

The enzyme catalyses [protein-PII]-L-tyrosine + UTP = [protein-PII]-uridylyl-L-tyrosine + diphosphate. It carries out the reaction [protein-PII]-uridylyl-L-tyrosine + H2O = [protein-PII]-L-tyrosine + UMP + H(+). Its activity is regulated as follows. Uridylyltransferase (UTase) activity is inhibited by glutamine, while glutamine activates uridylyl-removing (UR) activity. Functionally, modifies, by uridylylation and deuridylylation, the PII regulatory proteins (GlnB and homologs), in response to the nitrogen status of the cell that GlnD senses through the glutamine level. Under low glutamine levels, catalyzes the conversion of the PII proteins and UTP to PII-UMP and PPi, while under higher glutamine levels, GlnD hydrolyzes PII-UMP to PII and UMP (deuridylylation). Thus, controls uridylylation state and activity of the PII proteins, and plays an important role in the regulation of nitrogen assimilation and metabolism. This is Bifunctional uridylyltransferase/uridylyl-removing enzyme from Aromatoleum aromaticum (strain DSM 19018 / LMG 30748 / EbN1) (Azoarcus sp. (strain EbN1)).